A 377-amino-acid chain; its full sequence is GTP 3',8-cyclase (377 aa).

The segment at 1–29 (MTTRLYLSPTPPRNDREGASKSTSASIKH) is disordered. Residues 45–271 (RFGRIARDLR…FTLSPAKEPR (227 aa)) form the Radical SAM core domain. GTP is bound at residue Arg-54. [4Fe-4S] cluster contacts are provided by Cys-61 and Cys-65. Tyr-67 contributes to the S-adenosyl-L-methionine binding site. [4Fe-4S] cluster is bound at residue Cys-68. Arg-105 is a binding site for GTP. An S-adenosyl-L-methionine-binding site is contributed by Gly-109. Thr-140 contacts GTP. Ser-164 contacts S-adenosyl-L-methionine. Lys-201 lines the GTP pocket. Met-235 is a binding site for S-adenosyl-L-methionine. Residues Cys-304 and Cys-307 each contribute to the [4Fe-4S] cluster site. 309–311 (RSR) contributes to the GTP binding site. Position 321 (Cys-321) interacts with [4Fe-4S] cluster.

This sequence belongs to the radical SAM superfamily. MoaA family. Monomer and homodimer. [4Fe-4S] cluster is required as a cofactor.

The catalysed reaction is GTP + AH2 + S-adenosyl-L-methionine = (8S)-3',8-cyclo-7,8-dihydroguanosine 5'-triphosphate + 5'-deoxyadenosine + L-methionine + A + H(+). The protein operates within cofactor biosynthesis; molybdopterin biosynthesis. Functionally, catalyzes the cyclization of GTP to (8S)-3',8-cyclo-7,8-dihydroguanosine 5'-triphosphate. This Corynebacterium glutamicum (strain R) protein is GTP 3',8-cyclase.